Here is a 757-residue protein sequence, read N- to C-terminus: Amine oxidase [copper-containing] 2 (757 aa).

Topologically, residues 1–4 (MNLK) are cytoplasmic. A helical transmembrane segment spans residues 5–25 (VLLLLLGLSFLTVFALVYVLL). The Extracellular segment spans residues 26–757 (TRQGSFSQSP…NLPSFSYEGL (732 aa)). N-linked (GlcNAc...) asparagine glycans are attached at residues N133, N198, and N226. The Proton acceptor role is filled by D381. The cysteines at positions 399 and 425 are disulfide-linked. Y466 functions as the Schiff-base intermediate with substrate; via topaquinone in the catalytic mechanism. Y466 carries the post-translational modification 2',4',5'-topaquinone. 2 residues coordinate Cu(2+): H517 and H519. Ca(2+) is bound by residues D526, L527, D528, E569, E638, F660, and N662. N663 is a glycosylation site (N-linked (GlcNAc...) asparagine). 3 residues coordinate Ca(2+): E664, D670, and L671. H681 contributes to the Cu(2+) binding site. A disulfide bridge connects residues C731 and C738.

The protein belongs to the copper/topaquinone oxidase family. In terms of assembly, homodimer; disulfide-linked. Probably forms heterodimers with AOC3. Cu(2+) is required as a cofactor. It depends on Ca(2+) as a cofactor. The cofactor is L-topaquinone. In terms of processing, topaquinone (TPQ) is generated by copper-dependent autoxidation of a specific tyrosyl residue. In terms of tissue distribution, significantly much highly expressed in retina.

Its subcellular location is the cell membrane. The catalysed reaction is 2-phenylethylamine + O2 + H2O = 2-phenylacetaldehyde + H2O2 + NH4(+). The enzyme catalyses tryptamine + O2 + H2O = indole-3-acetaldehyde + H2O2 + NH4(+). It catalyses the reaction tyramine + O2 + H2O = (4-hydroxyphenyl)acetaldehyde + H2O2 + NH4(+). Catalyzes the oxidative deamination of primary amines to the corresponding aldehydes with the concomitant production of hydrogen peroxide and ammonia. Has a preference for 2-phenylethylamine, tryptamine and tyramine. Could also act on methylamine and benzylamine but much less efficiently. The polypeptide is Amine oxidase [copper-containing] 2 (Mus musculus (Mouse)).